Here is a 135-residue protein sequence, read N- to C-terminus: Histone H3.3C (135 aa).

The disordered stretch occupies residues 1–41 (MARTKQTARKSTGGKAPRKQLATKAARKSTPSTCGVKPHRY). An Asymmetric dimethylarginine; by PRMT6; alternate modification is found at Arg3. A Citrulline; alternate modification is found at Arg3. At Thr4 the chain carries Phosphothreonine; by HASPIN. Lys5 is modified (allysine; alternate). N6,N6,N6-trimethyllysine; alternate is present on Lys5. Lys5 is modified (N6,N6-dimethyllysine; alternate). Lys5 is modified (N6-(2-hydroxyisobutyryl)lysine; alternate). An N6-(beta-hydroxybutyryl)lysine; alternate modification is found at Lys5. At Lys5 the chain carries N6-acetyllysine; alternate. At Lys5 the chain carries N6-methyllysine; alternate. The residue at position 6 (Gln6) is a 5-glutamyl dopamine; alternate. Gln6 is modified (5-glutamyl serotonin; alternate). Thr7 is subject to Phosphothreonine; by PKC. The residue at position 9 (Arg9) is a Citrulline; alternate. A Symmetric dimethylarginine; by PRMT5; alternate modification is found at Arg9. The residue at position 10 (Lys10) is an N6,N6,N6-trimethyllysine; alternate. At Lys10 the chain carries N6,N6-dimethyllysine; alternate. N6-(2-hydroxyisobutyryl)lysine; alternate is present on Lys10. Lys10 carries the post-translational modification N6-(beta-hydroxybutyryl)lysine; alternate. Lys10 is modified (N6-acetyllysine; alternate). Lys10 is modified (N6-methyllysine; alternate). Position 10 is an N6-lactoyllysine; alternate (Lys10). Position 11 is an ADP-ribosylserine; alternate (Ser11). The residue at position 11 (Ser11) is a Phosphoserine; alternate; by AURKB, AURKC, RPS6KA3, RPS6KA4 and RPS6KA5. Position 12 is a phosphothreonine; by PKC (Thr12). Lys15 is subject to N6-(2-hydroxyisobutyryl)lysine; alternate. Residue Lys15 is modified to N6-(beta-hydroxybutyryl)lysine; alternate. Residue Lys15 is modified to N6-acetyllysine; alternate. Position 15 is an N6-lactoyllysine; alternate (Lys15). N6-glutaryllysine; alternate is present on Lys15. Lys15 is modified (N6-succinyllysine; alternate). Arg18 bears the Citrulline; alternate mark. Position 18 is an asymmetric dimethylarginine; by CARM1; alternate (Arg18). Residues Lys19 and Lys24 each carry the N6-(2-hydroxyisobutyryl)lysine; alternate modification. Residues Lys19 and Lys24 each carry the N6-(beta-hydroxybutyryl)lysine; alternate modification. 2 positions are modified to N6-acetyllysine; alternate: Lys19 and Lys24. Residues Lys19 and Lys24 each carry the N6-methyllysine; alternate modification. N6-lactoyllysine; alternate occurs at positions 19 and 24. N6-glutaryllysine; alternate is present on residues Lys19 and Lys24. Residues Lys19 and Lys24 each carry the N6-butyryllysine; alternate modification. Arg27 carries the post-translational modification Citrulline. Residue Lys28 is modified to N6,N6,N6-trimethyllysine; alternate. Lys28 is subject to N6,N6-dimethyllysine; alternate. Lys28 carries the N6-(2-hydroxyisobutyryl)lysine; alternate modification. Lys28 bears the N6-acetyllysine; alternate mark. Position 28 is an N6-methyllysine; alternate (Lys28). At Lys28 the chain carries N6-lactoyllysine; alternate. N6-glutaryllysine; alternate is present on Lys28. An ADP-ribosylserine; alternate modification is found at Ser29. A Phosphoserine; alternate; by AURKB, AURKC and RPS6KA5 modification is found at Ser29. Ser32 is modified (phosphoserine). At Lys37 the chain carries N6-methyllysine. Tyr41 is modified (phosphotyrosine). The residue at position 56 (Lys56) is an N6,N6,N6-trimethyllysine; alternate. Residue Lys56 is modified to N6-(2-hydroxyisobutyryl)lysine; alternate. Lys56 bears the N6-(beta-hydroxybutyryl)lysine; alternate mark. The residue at position 56 (Lys56) is an N6-acetyllysine; alternate. An N6-lactoyllysine; alternate modification is found at Lys56. Lys56 is modified (N6-glutaryllysine; alternate). N6-succinyllysine; alternate is present on Lys56. Lys56 carries the post-translational modification N6-methyllysine; by EHMT2; alternate. Ser57 bears the Phosphoserine mark. N6-(2-hydroxyisobutyryl)lysine; alternate is present on Lys64. Lys64 bears the N6-methyllysine; alternate mark. Thr80 is subject to Phosphothreonine. At Ser86 the chain carries Phosphoserine. Position 107 is a phosphothreonine (Thr107). An N6-glutaryllysine; alternate mark is found at Lys115 and Lys122. Lys115 is subject to N6-acetyllysine. N6-(2-hydroxyisobutyryl)lysine; alternate is present on Lys122. Position 122 is an N6-acetyllysine; alternate (Lys122). The residue at position 122 (Lys122) is an N6-methyllysine; alternate. The residue at position 122 (Lys122) is an N6-succinyllysine; alternate.

This sequence belongs to the histone H3 family. As to quaternary structure, the nucleosome is a histone octamer containing two molecules each of H2A, H2B, H3 and H4 assembled in one H3-H4 heterotetramer and two H2A-H2B heterodimers. The octamer wraps approximately 147 bp of DNA. Acetylation is generally linked to gene activation. Acetylation on Lys-10 (H3K9ac) impairs methylation at Arg-9 (H3R8me2s). Acetylation on Lys-19 (H3K18ac) and Lys-24 (H3K24ac) favors methylation at Arg-18 (H3R17me). Acetylation at Lys-122 (H3K122ac) by EP300/p300 plays a central role in chromatin structure: localizes at the surface of the histone octamer and stimulates transcription, possibly by promoting nucleosome instability. In terms of processing, citrullination at Arg-9 (H3R8ci) and/or Arg-18 (H3R17ci) by PADI4 impairs methylation and represses transcription. Post-translationally, asymmetric dimethylation at Arg-18 (H3R17me2a) by CARM1 is linked to gene activation. Symmetric dimethylation at Arg-9 (H3R8me2s) by PRMT5 is linked to gene repression. Asymmetric dimethylation at Arg-3 (H3R2me2a) by PRMT6 is linked to gene repression and is mutually exclusive with H3 Lys-5 methylation (H3K4me2 and H3K4me3). H3R2me2a is present at the 3' of genes regardless of their transcription state and is enriched on inactive promoters, while it is absent on active promoters. Methylation at Lys-5 (H3K4me) is linked to gene activation. Methylation at Lys-5 (H3K4me) facilitates subsequent acetylation of H3 and H4. Methylation at Lys-10 (H3K9me) and Lys-28 (H3K27me) are linked to gene repression. Methylation at Lys-10 (H3K9me) is a specific target for HP1 proteins (CBX1, CBX3 and CBX5) and prevents subsequent phosphorylation at Ser-11 (H3S10ph) and acetylation of H3 and H4. Methylation at Lys-5 (H3K4me) requires preliminary monoubiquitination of H2B at 'Lys-120'. Methylation at Lys-10 (H3K9me) and Lys-28 (H3K27me) are enriched in inactive X chromosome chromatin. Monomethylation at Lys-56 (H3K56me1) by EHMT2/G9A in G1 phase promotes interaction with PCNA and is required for DNA replication. In terms of processing, phosphorylated at Thr-4 (H3T3ph) by HASPIN during prophase and dephosphorylated during anaphase. Phosphorylation at Ser-11 (H3S10ph) by AURKB is crucial for chromosome condensation and cell-cycle progression during mitosis and meiosis. In addition phosphorylation at Ser-11 (H3S10ph) by RPS6KA4 and RPS6KA5 is important during interphase because it enables the transcription of genes following external stimulation, like mitogens, stress, growth factors or UV irradiation and result in the activation of genes, such as c-fos and c-jun. Phosphorylation at Ser-11 (H3S10ph), which is linked to gene activation, prevents methylation at Lys-10 (H3K9me) but facilitates acetylation of H3 and H4. Phosphorylation at Ser-11 (H3S10ph) by AURKB mediates the dissociation of HP1 proteins (CBX1, CBX3 and CBX5) from heterochromatin. Phosphorylation at Ser-11 (H3S10ph) is also an essential regulatory mechanism for neoplastic cell transformation. Phosphorylated at Ser-29 (H3S28ph) by MAP3K20 isoform 1, RPS6KA5 or AURKB during mitosis or upon ultraviolet B irradiation. Phosphorylation at Thr-7 (H3T6ph) by PRKCB is a specific tag for epigenetic transcriptional activation that prevents demethylation of Lys-5 (H3K4me) by LSD1/KDM1A. At centromeres, specifically phosphorylated at Thr-12 (H3T11ph) from prophase to early anaphase, by DAPK3 and PKN1. Phosphorylation at Thr-12 (H3T11ph) by PKN1 or isoform M2 of PKM (PKM2) is a specific tag for epigenetic transcriptional activation that promotes demethylation of Lys-10 (H3K9me) by KDM4C/JMJD2C. Phosphorylation at Tyr-41 (H3Y41ph) by JAK2 promotes exclusion of CBX5 (HP1 alpha) from chromatin. Post-translationally, lysine deamination at Lys-5 (H3K4all) to form allysine is mediated by LOXL2. Allysine formation by LOXL2 only takes place on H3K4me3 and results in gene repression. Butyrylation of histones marks active promoters and competes with histone acetylation. It is present during late spermatogenesis. In terms of processing, succinylated. Desuccinylation at Lys-122 (H3K122succ) by SIRT7 in response to DNA damage promotes chromatin condensation and double-strand breaks (DSBs) repair. Post-translationally, serine ADP-ribosylation constitutes the primary form of ADP-ribosylation of proteins in response to DNA damage. Serine ADP-ribosylation at Ser-11 (H3S10ADPr) is mutually exclusive with phosphorylation at Ser-11 (H3S10ph) and impairs acetylation at Lys-10 (H3K9ac). As to expression, specifically expressed in the seminiferous tubules of testis.

The protein resides in the nucleus. It is found in the chromosome. Its function is as follows. Core component of nucleosome. Nucleosomes wrap and compact DNA into chromatin, limiting DNA accessibility to the cellular machineries which require DNA as a template. Histones thereby play a central role in transcription regulation, DNA repair, DNA replication and chromosomal stability. DNA accessibility is regulated via a complex set of post-translational modifications of histones, also called histone code, and nucleosome remodeling. Hominid-specific H3.5/H3F3C preferentially colocalizes with euchromatin, and it is associated with actively transcribed genes. The polypeptide is Histone H3.3C (Homo sapiens (Human)).